The following is a 428-amino-acid chain: Tyrosine--tRNA ligase (428 aa).

Tyr-41 is a binding site for L-tyrosine. The 'HIGH' region signature appears at 46-55 (PTADSLHLGH). Residues Tyr-179 and Gln-183 each coordinate L-tyrosine. Positions 239–243 (KFGKT) match the 'KMSKS' region motif. Lys-242 is an ATP binding site. In terms of domain architecture, S4 RNA-binding spans 361-418 (ADLMQALVDSELQPSRGQARKTIASNAVTINGEKQSDPEYFFQDSDILFGRYTLLRRG).

The protein belongs to the class-I aminoacyl-tRNA synthetase family. TyrS type 1 subfamily. As to quaternary structure, homodimer.

It localises to the cytoplasm. It catalyses the reaction tRNA(Tyr) + L-tyrosine + ATP = L-tyrosyl-tRNA(Tyr) + AMP + diphosphate + H(+). Catalyzes the attachment of tyrosine to tRNA(Tyr) in a two-step reaction: tyrosine is first activated by ATP to form Tyr-AMP and then transferred to the acceptor end of tRNA(Tyr). This is Tyrosine--tRNA ligase from Citrobacter koseri (strain ATCC BAA-895 / CDC 4225-83 / SGSC4696).